The sequence spans 448 residues: Protein arginine N-methyltransferase 2 (448 aa).

2 interaction with ESR1 regions span residues 1–289 (MEAP…SALK) and 145–287 (KESL…NLSA). Positions 42–101 (LQPEEFVAIADYTATDETQLSFLRGEKILILRQTTADWWWGERAGCCGYIPANHLGKQLE) constitute an SH3 domain. Arg73 and Arg84 each carry asymmetric dimethylarginine. Positions 95–219 (HLGKQLEEYD…DVVLPEKVDV (125 aa)) are interaction with RB1. The region spanning 111-414 (DEEYFDSYGT…CCVTKKSGME (304 aa)) is the SAM-dependent MTase PRMT-type domain. The S-adenosyl-L-methionine site is built by His124, Arg133, Gly157, Glu180, and Glu209. Active-site residues include Glu223 and Glu232.

Belongs to the class I-like SAM-binding methyltransferase superfamily. Protein arginine N-methyltransferase family. In terms of assembly, self-associates. Interacts with HNRNPUL1. Interacts with NFKBIA. Interacts with NCOA6 coactivator. Interacts (via SH3 domain) with PRMT8. Interacts with AR. Interacts with ESR1, ESR2, PGR, PPARG, RARA, RXRA and THRB. Interacts with RB1 and E2F1. Expressed in liver, pancreas, lung, brain, skeletal muscle, heart, muscle and fat.

The protein resides in the cytoplasm. It localises to the nucleus. The catalysed reaction is L-arginyl-[protein] + 2 S-adenosyl-L-methionine = N(omega),N(omega)-dimethyl-L-arginyl-[protein] + 2 S-adenosyl-L-homocysteine + 2 H(+). Functionally, arginine methyltransferase that methylates the guanidino nitrogens of arginyl residues in proteins such as STAT3, FBL, histone H4. May inhibit NF-kappa-B transcription, and promote apoptosis. Represses E2F1 transcriptional activity (in a RB1-dependent manner). Has a negative regulation effect on G1 to S transition of mitotic cell cycle. Involved in growth regulation. Acts as a coactivator (with NCOA2) of the androgen receptor (AR)-mediated transactivation. Acts as a coactivator (with estrogen) of estrogen receptor (ER)-mediated transactivation. Enhances PGR, PPARG, RARA-mediated transactivation. The protein is Protein arginine N-methyltransferase 2 (Prmt2) of Mus musculus (Mouse).